Consider the following 243-residue polypeptide: Lipid II isoglutaminyl synthase (glutamine-hydrolyzing) subunit GatD (243 aa).

The GATase cobBQ-type domain occupies 6–197; that stretch reads IYHFMSDKLN…LHGPILPKNY (192 aa). Residue cysteine 94 is the Nucleophile of the active site. Arginine 128 serves as a coordination point for substrate. Residue histidine 189 is part of the active site.

It belongs to the CobB/CobQ family. GatD subfamily. In terms of assembly, forms a heterodimer with MurT.

It carries out the reaction beta-D-GlcNAc-(1-&gt;4)-Mur2Ac(oyl-L-Ala-gamma-D-Glu-L-Lys-D-Ala-D-Ala)-di-trans,octa-cis-undecaprenyl diphosphate + L-glutamine + ATP + H2O = beta-D-GlcNAc-(1-&gt;4)-Mur2Ac(oyl-L-Ala-D-isoglutaminyl-L-Lys-D-Ala-D-Ala)-di-trans,octa-cis-undecaprenyl diphosphate + L-glutamate + ADP + phosphate + H(+). The catalysed reaction is L-glutamine + H2O = L-glutamate + NH4(+). The protein operates within cell wall biogenesis; peptidoglycan biosynthesis. In terms of biological role, the lipid II isoglutaminyl synthase complex catalyzes the formation of alpha-D-isoglutamine in the cell wall lipid II stem peptide. The GatD subunit catalyzes the hydrolysis of glutamine to glutamate and ammonia. The resulting ammonia molecule is channeled to the active site of MurT. This is Lipid II isoglutaminyl synthase (glutamine-hydrolyzing) subunit GatD from Staphylococcus aureus (strain N315).